Consider the following 300-residue polypeptide: Large ribosomal subunit protein bL9m (300 aa).

Belongs to the bacterial ribosomal protein bL9 family. As to quaternary structure, component of the mitochondrial large ribosomal subunit (mt-LSU). Mature N.crassa 74S mitochondrial ribosomes consist of a small (37S) and a large (54S) subunit. The 37S small subunit contains a 16S ribosomal RNA (16S mt-rRNA) and 32 different proteins. The 54S large subunit contains a 23S rRNA (23S mt-rRNA) and 42 different proteins.

Its subcellular location is the mitochondrion. Its function is as follows. Component of the mitochondrial ribosome (mitoribosome), a dedicated translation machinery responsible for the synthesis of mitochondrial genome-encoded proteins, including at least some of the essential transmembrane subunits of the mitochondrial respiratory chain. The mitoribosomes are attached to the mitochondrial inner membrane and translation products are cotranslationally integrated into the membrane. This chain is Large ribosomal subunit protein bL9m (mrpl50), found in Neurospora crassa (strain ATCC 24698 / 74-OR23-1A / CBS 708.71 / DSM 1257 / FGSC 987).